A 566-amino-acid polypeptide reads, in one-letter code: MGRAGGGGPGRGPPPLLLFLGAALVLASGAVPAREAGSAVEAEELVKGSPAWEPPANDTREEAGPPAAGEDEASWTAPGGELAGPEEVLQESAAVTGTAWLEADSPGLGGVTAEAGSGDAQALPATLQAPHEVLGQSIMPPAIPEATEASGPPSPTPGDKLSPASELPKESPLEVWLNLGGSTPDPQGPELTYPFQGTLEPQPASDIIDIDYFEGLDGEGRGADLGSFPGSPGTSENHPDTEGETPSWSLLDLYDDFTPFDESDFYPTTSFYDDLDEEEEEEEDDKDAVGGGDLEDENELLVPTGKPGLGPGTGQPTSRWHAVPPQHTLGSVPGSSIALRPRPGEPGRDLASSENGTECRSGFVRHNGSCRSVCDLFPSYCHNGGQCYLVENIGAFCRCNTQDYIWHKGMRCESIITDFQVMCVAVGSAALVLLLLFMMTVFFAKKLYLLKTENTKLRRTNKFRTPSELHNDNFSLSTIAEGSHPNVRKLCNTPRTSSPHARALAHYDNVICQDDPSAPHKIQEVLKSCLKEEESFNIQNSMSPKLEGGKGDQADLDVNCLQNNLT.

An N-terminal signal peptide occupies residues M1 to A30. The Extracellular portion of the chain corresponds to V31–C423. S38 carries O-linked (Xyl...) (chondroitin sulfate) serine glycosylation. A disordered region spans residues A39–L82. N57 carries an N-linked (GlcNAc...) asparagine glycan. The O-linked (Xyl...) (chondroitin sulfate) serine glycan is linked to S117. Disordered stretches follow at residues I143 to Q202, G215 to W248, and E262 to E354. A glycan (O-linked (GalNAc...) serine) is linked at S165. An interaction with TNC and TNR region spans residues D264–L301. The segment covering D273 to K286 has biased composition (acidic residues). The EGF-like domain occupies R371 to E413. 3 disulfides stabilise this stretch: C374/C387, C381/C397, and C399/C412. The chain crosses the membrane as a helical span at residues V424–A444. An interaction with GOPC region spans residues F442–T460. Topologically, residues K445–T566 are cytoplasmic. 4 positions are modified to phosphoserine: S467, S475, S483, and S543.

As to quaternary structure, binds TNR and probably TNC. Interacts with ERBB3 and GOPC. Interacts with MDK; this interaction is independent of the presence of chondroitin sulfate chains and promotes elongation of oligodendroglial precursor-like cells. N-glycosylated. In terms of processing, O-glycosylated; contains chondroitin sulfate glycans. Part-time proteoglycan, expressed in part as a proteoglycan exhibiting chondroitin sulfate glycans and in part as a non-proteoglycan form. The relative amount of both forms depends on tissues and tissue maturation. Post-translationally, phosphorylated; in intracellular and extracellular parts. As to expression, detected in cerebrospinal fluid (at protein level). Detected in urine (at protein level). Expressed in brain (at protein level).

The protein resides in the cell membrane. It is found in the synaptic cell membrane. It localises to the endoplasmic reticulum membrane. Its subcellular location is the golgi apparatus membrane. The protein localises to the cell surface. The protein resides in the secreted. Functionally, may function as a growth and differentiation factor involved in neuritogenesis. May induce ERBB3 activation. This Homo sapiens (Human) protein is Chondroitin sulfate proteoglycan 5 (CSPG5).